Here is a 507-residue protein sequence, read N- to C-terminus: uncharacterized protein (507 aa).

The next 12 helical transmembrane spans lie at 11 to 31 (ILCF…IFPI), 97 to 117 (AWIA…YGHL), 125 to 145 (PVSF…GFAP), 149 to 169 (VFAV…IVFY), 187 to 207 (FFNW…CGYW), 209 to 229 (SAAI…LWLP), 283 to 303 (LFSS…WFST), 326 to 346 (FVQA…DLFI), 354 to 374 (LHQV…ALMI), 388 to 408 (LAII…WDAC), 423 to 443 (IGIG…PQMA), and 452 to 472 (IPYI…CFFL).

This sequence belongs to the major facilitator superfamily.

Its subcellular location is the membrane. This is an uncharacterized protein from Caenorhabditis elegans.